A 273-amino-acid polypeptide reads, in one-letter code: Photosystem I chlorophyll a/b-binding protein 3-1, chloroplastic (273 aa).

The transit peptide at 1-39 directs the protein to the chloroplast; that stretch reads MAAQALVSSSLTSSVQTARQIFGSKPVASASQKKSSFVV. Position 56 (W56) interacts with chlorophyll b. Chlorophyll a-binding residues include F76, S82, and E100. Chlorophyll b is bound at residue R105. Residues 106-126 form a helical membrane-spanning segment; that stretch reads FAMLGAAGAIAPEILGKAGLI. I140 serves as a coordination point for chlorophyll b. The chain crosses the membrane as a helical span at residues 146-166; it reads YTYWADNYTLFVLEMALMGFA. Chlorophyll b is bound by residues E167 and R170. S195 bears the Phosphoserine mark. The chlorophyll a site is built by K224, E225, N228, R230, Q242, and H257. The helical transmembrane segment at 231-251 threads the bilayer; that stretch reads LAMLAILGYFIQGLVTGVGPY. F272 contributes to the chlorophyll b binding site.

Belongs to the light-harvesting chlorophyll a/b-binding (LHC) protein family. The LHC complex consists of chlorophyll a-b binding proteins. Red-emitting heterodimer with LHCA2. Interacts with LHCA5. Binds to carotenoids. It depends on Binds at least 14 chlorophylls (8 Chl-a and 6 Chl-b) and carotenoids such as lutein and neoxanthin. as a cofactor. In terms of processing, photoregulated by reversible phosphorylation of its threonine residues.

It is found in the plastid. Its subcellular location is the chloroplast thylakoid membrane. Functionally, the light-harvesting complex (LHC) functions as a light receptor, it captures and delivers excitation energy to photosystems with which it is closely associated, here photosystem I. This chain is Photosystem I chlorophyll a/b-binding protein 3-1, chloroplastic, found in Arabidopsis thaliana (Mouse-ear cress).